Here is a 519-residue protein sequence, read N- to C-terminus: MTKMIDISAMPAELSEKNTLTARRLGIDTHEHAVIYMRADCHICRAEGFNNHARIKVSGPSNKAIIATLNLVVTDLLSPGQIGLSETAWLRLQLNEGDPVRLIHPAPLLSLSAVRAKIFGEPLDQNNLDAIVGDIAAGRFSDIHLSAFLTASAAHEQSFEEIRDLTLSMVNVGQRLDWGRAPIVDKHCVGGLPGNRTTPIVVAICVAAGLTMPKTSSRAITSPAGTADTMETLAPVELDVSAMRRVVETVGGCIVWGGAVALSPVDDTLIRIERALDIDSDGQLVASVLSKKIAAGATHLVIDMPVGPTAKVRTEEAAARLEGLFARVGSNLGLNLKIMRTDGSQPVGRGIGPALEAWDVLAVLNNEGHNVPDLTVQATLLAGELLEMGQAAPAGRGAELATELLVNGRAWRAFEAICEAQGGFREPPTAPHYQVIQSPRDGVVGRIDNRRLAKAAKLAGAPASKAAGIVLHAKLGSQMVKGQPLYSLHSQSLGELSYAHDYLASQPEIIEIEEEQCPR.

Belongs to the thymidine/pyrimidine-nucleoside phosphorylase family. Type 2 subfamily.

The catalysed reaction is thymidine + phosphate = 2-deoxy-alpha-D-ribose 1-phosphate + thymine. This chain is Putative thymidine phosphorylase, found in Maricaulis maris (strain MCS10) (Caulobacter maris).